The primary structure comprises 571 residues: Proline--tRNA ligase (571 aa).

The protein belongs to the class-II aminoacyl-tRNA synthetase family. ProS type 1 subfamily. As to quaternary structure, homodimer.

Its subcellular location is the cytoplasm. The catalysed reaction is tRNA(Pro) + L-proline + ATP = L-prolyl-tRNA(Pro) + AMP + diphosphate. In terms of biological role, catalyzes the attachment of proline to tRNA(Pro) in a two-step reaction: proline is first activated by ATP to form Pro-AMP and then transferred to the acceptor end of tRNA(Pro). As ProRS can inadvertently accommodate and process non-cognate amino acids such as alanine and cysteine, to avoid such errors it has two additional distinct editing activities against alanine. One activity is designated as 'pretransfer' editing and involves the tRNA(Pro)-independent hydrolysis of activated Ala-AMP. The other activity is designated 'posttransfer' editing and involves deacylation of mischarged Ala-tRNA(Pro). The misacylated Cys-tRNA(Pro) is not edited by ProRS. This chain is Proline--tRNA ligase, found in Pseudomonas aeruginosa (strain LESB58).